The primary structure comprises 432 residues: UDP-N-acetylmuramate--L-alanine ligase (432 aa).

108-114 (GAHGKTS) is a binding site for ATP.

Belongs to the MurCDEF family.

The protein resides in the cytoplasm. The catalysed reaction is UDP-N-acetyl-alpha-D-muramate + L-alanine + ATP = UDP-N-acetyl-alpha-D-muramoyl-L-alanine + ADP + phosphate + H(+). Its pathway is cell wall biogenesis; peptidoglycan biosynthesis. Cell wall formation. The protein is UDP-N-acetylmuramate--L-alanine ligase of Bacillus licheniformis (strain ATCC 14580 / DSM 13 / JCM 2505 / CCUG 7422 / NBRC 12200 / NCIMB 9375 / NCTC 10341 / NRRL NRS-1264 / Gibson 46).